The sequence spans 213 residues: Probable anti-sigma-F factor NrsF (213 aa).

6 helical membrane-spanning segments follow: residues 27 to 47, 51 to 71, 91 to 111, 126 to 146, 159 to 179, and 187 to 207; these read ALAI…LLQV, LGLA…TCLA, VPAA…FTLI, TWKS…AAVL, LAGF…YCLH, and FIGF…VLLG.

It belongs to the NrsF anti-sigma-F factor family.

The protein localises to the cell inner membrane. Probably an anti-sigma factor for extracytoplasmic function (ECF) sigma factor sigma-F (SigF), which responds to (hypo)chlorite. ECF sigma factors are held in an inactive form by a cognate anti-sigma factor. The sequence is that of Probable anti-sigma-F factor NrsF from Azospira oryzae (strain ATCC BAA-33 / DSM 13638 / PS) (Dechlorosoma suillum).